The chain runs to 84 residues: Exodeoxyribonuclease 7 small subunit (84 aa).

Residues 65–84 are disordered; the sequence is QEGDWTTSPFEPASGEPPGG.

This sequence belongs to the XseB family. In terms of assembly, heterooligomer composed of large and small subunits.

The protein resides in the cytoplasm. It carries out the reaction Exonucleolytic cleavage in either 5'- to 3'- or 3'- to 5'-direction to yield nucleoside 5'-phosphates.. Bidirectionally degrades single-stranded DNA into large acid-insoluble oligonucleotides, which are then degraded further into small acid-soluble oligonucleotides. The sequence is that of Exodeoxyribonuclease 7 small subunit from Syntrophobacter fumaroxidans (strain DSM 10017 / MPOB).